The chain runs to 314 residues: Ribosome production factor 2 homolog (314 aa).

Positions 28-238 (KKTLILHGTK…IRRNRLPNDS (211 aa)) constitute a Brix domain. A disordered region spans residues 238–314 (SLMKEAMRTS…VAKKMKVSSE (77 aa)). Composition is skewed to basic and acidic residues over residues 239–249 (LMKEAMRTSKD) and 275–314 (QKLK…VSSE).

It belongs to the RPF2 family.

Its subcellular location is the nucleus. The protein resides in the nucleolus. In Arabidopsis thaliana (Mouse-ear cress), this protein is Ribosome production factor 2 homolog.